The sequence spans 1024 residues: Seizure 6-like protein (1024 aa).

A signal peptide spans 1–28 (MPAARPPAAGLRGISLFLALLLGSPAAA). Residues 29–958 (LERDALPEGD…ETSLEGGNMA (930 aa)) lie on the Extracellular side of the membrane. Disordered regions lie at residues 33–77 (ALPE…SQSA), 108–184 (RPKH…EVPL), and 212–234 (AHTL…EAPQ). O-linked (GalNAc...) serine glycosylation is present at serine 49. Over residues 56 to 66 (SPGKEHPEERV) the composition is skewed to basic and acidic residues. Basic residues predominate over residues 110–120 (KHALPPKKKLP). The span at 138–162 (SAATVQRAGSQPASQGLDLLSSSTE) shows a compositional bias: polar residues. 2 O-glycosylated at one site regions span residues 147–161 (SQPA…SSST) and 176–180 (SEEAS). Cysteine 281 and cysteine 308 are joined by a disulfide. The region spanning 281–389 (CSVSFSNPEG…GTFQLHYQAF (109 aa)) is the CUB 1 domain. Asparagine 311, asparagine 328, and asparagine 350 each carry an N-linked (GlcNAc...) asparagine glycan. Residues 391 to 450 (LSCNFPRRPDSGDVTVMDLHSGGVAHFHCHLGYELQGAKMLTCINASKPHWSSQEPICSA) enclose the Sushi 1 domain. Disulfide bonds link cysteine 393–cysteine 433 and cysteine 419–cysteine 448. Asparagine 435, asparagine 458, asparagine 474, asparagine 514, asparagine 576, asparagine 618, asparagine 674, and asparagine 742 each carry an N-linked (GlcNAc...) asparagine glycan. One can recognise a CUB 2 domain in the interval 452-562 (CGGAVHNATI…STFNIRFEAF (111 aa)). In terms of domain architecture, Sushi 2 spans 565–626 (GHCYEPYIQN…WNDTEPLCRA (62 aa)). Intrachain disulfides connect cysteine 567-cysteine 609 and cysteine 594-cysteine 624. Positions 628-739 (CGGELSAVAG…QGFIMNYIEV (112 aa)) constitute a CUB 3 domain. Sushi domains follow at residues 743–802 (DSCS…FCEK), 804–867 (MYCT…HCVS), and 871–932 (LACD…VCKV). Intrachain disulfides connect cysteine 745/cysteine 787, cysteine 773/cysteine 800, cysteine 806/cysteine 848, cysteine 834/cysteine 865, cysteine 873/cysteine 915, and cysteine 901/cysteine 930. A helical membrane pass occupies residues 959 to 979 (LAIFIPVLIISLLLGGAYIYI). Residues 980–1024 (TRCRYYSNLRLPLMYSHPYSQITVETEFDNPIYETGETREYEVSI) are Cytoplasmic-facing.

The protein belongs to the SEZ6 family. O-glycosylated. As to expression, widely expressed, including adult and fetal brains and lungs. Not expressed in all lung cancer cell lines.

The protein localises to the endoplasmic reticulum membrane. Its function is as follows. May contribute to specialized endoplasmic reticulum functions in neurons. This chain is Seizure 6-like protein (SEZ6L), found in Homo sapiens (Human).